Reading from the N-terminus, the 127-residue chain is Glycine cleavage system H protein (127 aa).

Positions 22-104 (EAVIGITHFA…YTEGWMLRVK (83 aa)) constitute a Lipoyl-binding domain. Lys63 bears the N6-lipoyllysine mark.

This sequence belongs to the GcvH family. The glycine cleavage system is composed of four proteins: P, T, L and H. It depends on (R)-lipoate as a cofactor.

Its function is as follows. The glycine cleavage system catalyzes the degradation of glycine. The H protein shuttles the methylamine group of glycine from the P protein to the T protein. This is Glycine cleavage system H protein from Nitratidesulfovibrio vulgaris (strain DP4) (Desulfovibrio vulgaris).